The primary structure comprises 336 residues: MPSATESKPETRKVVSIVGPTASGKTGLGIAIAKALEAKGEQAEIVNADAYQMYKGMDIGTAKASPEEQAEVRHHLIDIIEPDDAMSVARFQEIARAKIAELQAREVRPILVGGSGLYARAAIDDISFPGTDPEVRKRLEEREKVEGAGALFDELKTKDPEAAARMDPHNPRRTIRALEVIEVTGRPYSASLPHYRYVIPTVQIGLDLPREELDRRIDIRTKQMLENGFVEEVERIRPRLGITAGKALGYQQVVDYLDGLCDLNDTFMSIAQKTKRLARKQMGWFGRDPRIHWLQALNPALLGNAMAIIEHADAGDYDAIDAQADAYTQHHLGDIA.

ATP is bound at residue 19 to 26 (GPTASGKT). A substrate-binding site is contributed by 21-26 (TASGKT).

The protein belongs to the IPP transferase family. In terms of assembly, monomer. Requires Mg(2+) as cofactor.

It carries out the reaction adenosine(37) in tRNA + dimethylallyl diphosphate = N(6)-dimethylallyladenosine(37) in tRNA + diphosphate. In terms of biological role, catalyzes the transfer of a dimethylallyl group onto the adenine at position 37 in tRNAs that read codons beginning with uridine, leading to the formation of N6-(dimethylallyl)adenosine (i(6)A). The polypeptide is tRNA dimethylallyltransferase (Bifidobacterium adolescentis (strain ATCC 15703 / DSM 20083 / NCTC 11814 / E194a)).